The chain runs to 217 residues: MQNVEFASLIVMAVAIALLPFAAMVVTSYTKIVVVLGLLRNALGVQQVPPNMVLNGIAMIVSCFVMAPVGMEAMQRAHVQINAQGGTNITQVMPLLDAARDPFREFLNKHTNAREKAFFMRSAQQLWPPAKAAQLKDDDLIVLAPAFTLTELTSAFRIGFLLYLAFIVIDLVIANLLMALGLSQVTPSNVAIPFKLLLFVVMDGWSVLIHGLVNTYR.

4 helical membrane-spanning segments follow: residues 6 to 26, 52 to 72, 158 to 178, and 190 to 210; these read FASL…AMVV, MVLN…VGME, IGFL…NLLM, and VAIP…VLIH.

It belongs to the FliP/MopC/SpaP family.

It localises to the cell membrane. Functionally, involved in the secretion of PopA, a proteinaceous elicitor of the hypersensitivity response in plants. The sequence is that of Hypersensitivity response secretion protein HrcR (hrcR) from Ralstonia nicotianae (strain ATCC BAA-1114 / GMI1000) (Ralstonia solanacearum).